We begin with the raw amino-acid sequence, 349 residues long: Hydroxymethylglutaryl-CoA synthase (349 aa).

Residues Asp30 and Ala31 each contribute to the (3S)-3-hydroxy-3-methylglutaryl-CoA site. Glu82 (proton donor/acceptor) is an active-site residue. Positions 114 and 155 each coordinate (3S)-3-hydroxy-3-methylglutaryl-CoA. The active-site Acyl-thioester intermediate is Cys114. CoA is bound at residue Arg203. (3S)-3-hydroxy-3-methylglutaryl-CoA-binding residues include Thr205 and His238. His238 serves as the catalytic Proton donor/acceptor. A CoA-binding site is contributed by Lys243. Asn270 and Ser300 together coordinate (3S)-3-hydroxy-3-methylglutaryl-CoA.

Belongs to the thiolase-like superfamily. Archaeal HMG-CoA synthase family. In terms of assembly, interacts with acetoacetyl-CoA thiolase that catalyzes the precedent step in the pathway and with a DUF35 protein. The acetoacetyl-CoA thiolase/HMG-CoA synthase complex channels the intermediate via a fused CoA-binding site, which allows for efficient coupling of the endergonic thiolase reaction with the exergonic HMGCS reaction.

The catalysed reaction is acetoacetyl-CoA + acetyl-CoA + H2O = (3S)-3-hydroxy-3-methylglutaryl-CoA + CoA + H(+). It functions in the pathway metabolic intermediate biosynthesis; (R)-mevalonate biosynthesis; (R)-mevalonate from acetyl-CoA: step 2/3. Its function is as follows. Catalyzes the condensation of acetyl-CoA with acetoacetyl-CoA to form 3-hydroxy-3-methylglutaryl-CoA (HMG-CoA). Functions in the mevalonate (MVA) pathway leading to isopentenyl diphosphate (IPP), a key precursor for the biosynthesis of isoprenoid compounds that are building blocks of archaeal membrane lipids. In Methanococcus vannielii (strain ATCC 35089 / DSM 1224 / JCM 13029 / OCM 148 / SB), this protein is Hydroxymethylglutaryl-CoA synthase.